Here is a 572-residue protein sequence, read N- to C-terminus: Urease subunit alpha (572 aa).

The Urease domain maps to 136–572 (GGIDTHIHWI…VPLAQRYFLF (437 aa)). Ni(2+) contacts are provided by His-141, His-143, and Lys-224. Lys-224 carries the N6-carboxylysine modification. His-226 contributes to the substrate binding site. Ni(2+)-binding residues include His-253 and His-279. His-327 acts as the Proton donor in catalysis. Asp-367 contacts Ni(2+).

Belongs to the metallo-dependent hydrolases superfamily. Urease alpha subunit family. In terms of assembly, heterotrimer of UreA (gamma), UreB (beta) and UreC (alpha) subunits. Three heterotrimers associate to form the active enzyme. Requires Ni cation as cofactor. In terms of processing, carboxylation allows a single lysine to coordinate two nickel ions.

Its subcellular location is the cytoplasm. The catalysed reaction is urea + 2 H2O + H(+) = hydrogencarbonate + 2 NH4(+). The protein operates within nitrogen metabolism; urea degradation; CO(2) and NH(3) from urea (urease route): step 1/1. This Actinobacillus pleuropneumoniae serotype 5b (strain L20) protein is Urease subunit alpha.